The primary structure comprises 350 residues: Phosphotriesterase-related protein (350 aa).

The a divalent metal cation site is built by His22, His24, Glu169, His201, His230, and Asp298.

This sequence belongs to the metallo-dependent hydrolases superfamily. Phosphotriesterase family. A divalent metal cation serves as cofactor.

This chain is Phosphotriesterase-related protein, found in Drosophila erecta (Fruit fly).